We begin with the raw amino-acid sequence, 1466 residues long: ABC transporter C family member 6 (1466 aa).

A run of 10 helical transmembrane segments spans residues 16-36, 63-83, 91-111, 128-148, 158-178, 286-306, 322-339, 400-420, 425-445, and 512-532; these read SVLS…SWLF, LVLI…LLSC, WPFL…VYLF, VWWV…FVLY, FVIS…SCLW, IVLS…APYL, NQGY…LVEC, WFMH…WILY, LGSI…YPFA, and SVLW…CLLL. The 282-residue stretch at 286-567 folds into the ABC transmembrane type-1 1 domain; the sequence is IVLSALLAFV…LPETISMIVQ (282 aa). In terms of domain architecture, ABC transporter 1 spans 601 to 824; the sequence is VEISNGTFSW…GTDFMELVGA (224 aa). 636–643 is an ATP binding site; that stretch reads GTVGSGKS. A disordered region spans residues 840–876; sequence ASEKSTTDKENEVLHHKEKQENGSDNKPSGQLVQEEE. Basic and acidic residues predominate over residues 844 to 863; sequence STTDKENEVLHHKEKQENGS. A run of 3 helical transmembrane segments spans residues 890-910, 937-957, and 1026-1046; these read YMAL…QVLF, GFTL…CILI, and ILGI…VFIP. One can recognise an ABC transmembrane type-1 2 domain in the interval 900–1182; the sequence is IPLILVVQVL…LIWTLCDLEN (283 aa). In terms of domain architecture, ABC transporter 2 spans 1219 to 1453; it reads ITICNLQVRY…RSSLFSKLVA (235 aa). 1253-1260 is an ATP binding site; it reads GRTGCGKS.

It belongs to the ABC transporter superfamily. ABCC family. Conjugate transporter (TC 3.A.1.208) subfamily. Ubiquitous.

It is found in the membrane. The enzyme catalyses ATP + H2O + xenobioticSide 1 = ADP + phosphate + xenobioticSide 2.. Pump for glutathione S-conjugates. This Arabidopsis thaliana (Mouse-ear cress) protein is ABC transporter C family member 6 (ABCC6).